We begin with the raw amino-acid sequence, 739 residues long: Nucleoprotein (739 aa).

Residues 334–363 adopt a coiled-coil conformation; it reads VNVGEQYQQLREAATEAEKQLQQYAESREL. The segment at 415–646 is disordered; sequence PKTSGHYDDD…QDSDNTQPEH (232 aa). Low complexity-rich tracts occupy residues 449–458 and 504–514; these read SQDTTIPDVV and KGGQQKNSQKG. The segment covering 520-530 has biased composition (polar residues); the sequence is RQTQSRPTQNV. The span at 567–579 shows a compositional bias: acidic residues; the sequence is EEADPLDDADDET. The span at 611-638 shows a compositional bias: basic and acidic residues; it reads YRDHSEKRELPQDEQQDQDHTQEARNQD.

It belongs to the filoviruses nucleoprotein family. In terms of assembly, homooligomer. Homomultimerizes to form the nucleocapsid. Binds to viral genomic RNA. Interacts with VP35 and VP30 to form the nucleocapsid. Interacts with host PPP2R5C; this interaction leads to VP30 dephosphorylation and viral transcription. Interacts with VP24; this interaction facilitates nucleocapsid assembly and genome packaging. Interacts with matrix protein VP40; this interaction allows recruitment of the nucleocapsid into progeny virions. Interacts with host STAU1. Interacts with host NXF1 (via RNA-binding domain); this interaction recruits NXF1 to the inclusion bodies were viral replication takes place, probably to export viral mRNA-NXF1 complexes from these sites. Interacts with host CCDC92; this interaction sequesters NP in the host cytoplasm. Interacts with host TRIM14. Phosphorylated and O-glycosylated by host. Acetylated by host EP300 in vitro.

It localises to the virion. It is found in the host cytoplasm. In terms of biological role, oligomerizes into helical capsid to encapsidate the viral genome, protecting it from nucleases and the cellular innate immune response. VP35 binds to and stabilizes monomeric NP, keeping it soluble. Upon virus replication, NP is recruited to bind cooperatively viral genomic RNA and VP35 is released. The encapsidated genomic RNA is termed the nucleocapsid and serves as template for transcription and replication. The nucleocapsid is helical with a pitch of 10.81 NP per turn and a diameter of about 22nm. Each NP binds to six nucleotides of viral genomic RNA, three being exposed to the solvant and three hidden into the nucleocapsid. Also recruits host PPP2R5C phosphatase to dephosphorylate VP30 and thereby promote viral transcription. Upon virion assembly and budding, NP binds to VP24 and possibly host STAU1. This Epomops franqueti (Franquet's epauletted fruit bat) protein is Nucleoprotein (NP).